The primary structure comprises 249 residues: Inhibitor of growth protein 4 (249 aa).

Positions 25-118 form a coiled coil; the sequence is FQLMRDLDQR…ADLKEKQIES (94 aa). N6-acetyllysine is present on residues lysine 112, lysine 127, and lysine 129. Residues 115–163 are disordered; the sequence is QIESSDYDSSSSKGKKKGRTQKEKKAARARSKGKNSDEEAPKAAQKKLK. Positions 127–148 match the Bipartite nuclear localization signal motif; that stretch reads KGKKKGRTQKEKKAARARSKGK. Arginine 133 bears the Citrulline mark. An N6-acetyllysine mark is found at lysine 146, lysine 148, and lysine 156. Position 166 is a citrulline (arginine 166). The PHD-type zinc finger occupies 196 to 245; that stretch reads PTYCLCHQVSYGEMIGCDNPDCSIEWFHFACVGLTTKPRGKWFCPRCSQE. 8 residues coordinate Zn(2+): cysteine 199, cysteine 201, cysteine 212, cysteine 217, histidine 223, cysteine 226, cysteine 239, and cysteine 242.

The protein belongs to the ING family. Homodimer. Component of the HBO1 complex composed of KAT7/HBO1, MEAF6, ING4 or ING5, and one scaffold subunit: complexes containing BRPF scaffold (BRPF1, BRD1/BRPF2 or BRPF3) direct KAT7/HBO1 specificity towards H3K14ac, while complexes containing JADE scaffold (JADE1, JADE2 and JADE3) mediate acetylation of histone H4. Interacts with H3K4me3 and to a lesser extent with H3K4me2, the interaction augments KAT7/HBO1 acetylation activity on H3 tails. Interacts with EP300, RELA and TP53; these interactions may be indirect. Interacts with EGLN1. In terms of assembly, interacts with BCL2A1. Citrullination by PADI4 within the nuclear localization signal disrupts the interaction with p53 and increases susceptibility to degradation. Isoform 2, isoform 3, isoform 4 and isoform 5 are expressed in the mammary gland, ovary, spleen and muscle. In terms of tissue distribution, expressed in the mammary gland, ovary, spleen and muscle.

It localises to the nucleus. In terms of biological role, component of HBO1 complexes, which specifically mediate acetylation of histone H3 at 'Lys-14' (H3K14ac), and have reduced activity toward histone H4. Through chromatin acetylation it may function in DNA replication. May inhibit tumor progression by modulating the transcriptional output of signaling pathways which regulate cell proliferation. Can suppress brain tumor angiogenesis through transcriptional repression of RELA/NFKB3 target genes when complexed with RELA. May also specifically suppress loss of contact inhibition elicited by activated oncogenes such as MYC. Represses hypoxia inducible factor's (HIF) activity by interacting with HIF prolyl hydroxylase 2 (EGLN1). Can enhance apoptosis induced by serum starvation in mammary epithelial cell line HC11. This chain is Inhibitor of growth protein 4 (Ing4), found in Mus musculus (Mouse).